We begin with the raw amino-acid sequence, 351 residues long: CCN family member 3 (351 aa).

The signal sequence occupies residues 1–24 (METGGGQGLPVLLLLLLLLRPCEV). An IGFBP N-terminal domain is found at 27–101 (REAACPRPCG…GGGAGICMVL (75 aa)). 6 cysteine pairs are disulfide-bonded: Cys31/Cys57, Cys35/Cys59, Cys39/Cys60, Cys46/Cys63, Cys71/Cys85, and Cys77/Cys98. The VWFC domain maps to 104 to 170 (DNCVFDGMIY…GECCEKWVCD (67 aa)). Residues 201-246 (NCIEQTTEWSACSKSCGMGFSTRVTNRNQQCEMVKQTRLCMMRPCE) enclose the TSP type-1 domain. Intrachain disulfides connect Cys258–Cys295, Cys275–Cys309, Cys286–Cys325, Cys289–Cys327, and Cys294–Cys331. Positions 258 to 332 (CIQTKKSMKA…NTCVCHGNCP (75 aa)) constitute a CTCK domain. A glycan (N-linked (GlcNAc...) asparagine) is linked at Asn274.

This sequence belongs to the CCN family. As to expression, brain and heart, and at a lower level in muscle and intestine, in the embryo. Lung and less so in brain and spleen, in adult chicken.

The protein resides in the secreted. Its subcellular location is the cytoplasm. The protein localises to the cell junction. It is found in the gap junction. Its function is as follows. Immediate-early protein likely to play a role in cell growth regulation. Its overexpression is associated with tumorigenesis and expression of a N-terminal-truncated version of CCN3 gene in chicken embryonic fibroblasts (CEF) is sufficient to induce the transformation of CEF in vitro. The sequence is that of CCN family member 3 (CCN3) from Gallus gallus (Chicken).